Here is a 90-residue protein sequence, read N- to C-terminus: Large ribosomal subunit protein bL27 (90 aa).

Positions 1 to 13 (MATKKSGGSSSNG) are enriched in low complexity. The interval 1-20 (MATKKSGGSSSNGRDSRGRR) is disordered.

Belongs to the bacterial ribosomal protein bL27 family.

This is Large ribosomal subunit protein bL27 from Anaplasma marginale (strain Florida).